Consider the following 667-residue polypeptide: DNA ligase (667 aa).

Residues 32–36 (DSEYD), 81–82 (SL), and glutamate 110 each bind NAD(+). The N6-AMP-lysine intermediate role is filled by lysine 112. The NAD(+) site is built by arginine 133, glutamate 167, lysine 283, and lysine 307. The Zn(2+) site is built by cysteine 401, cysteine 404, cysteine 419, and cysteine 424. The BRCT domain occupies 586-667 (EGHPEFSGKT…FVDKQNELNS (82 aa)).

It belongs to the NAD-dependent DNA ligase family. LigA subfamily. It depends on Mg(2+) as a cofactor. Mn(2+) is required as a cofactor.

It catalyses the reaction NAD(+) + (deoxyribonucleotide)n-3'-hydroxyl + 5'-phospho-(deoxyribonucleotide)m = (deoxyribonucleotide)n+m + AMP + beta-nicotinamide D-nucleotide.. DNA ligase that catalyzes the formation of phosphodiester linkages between 5'-phosphoryl and 3'-hydroxyl groups in double-stranded DNA using NAD as a coenzyme and as the energy source for the reaction. It is essential for DNA replication and repair of damaged DNA. The polypeptide is DNA ligase (Staphylococcus aureus (strain bovine RF122 / ET3-1)).